We begin with the raw amino-acid sequence, 90 residues long: MKTAIFTVVLALAVFAVLSFGWEANEKALSEEFTELIHEKEAASETEARECRYFWGECHDHMPCCDWLVCRYKWSITYNICVWNRTFPEK.

A signal peptide spans 1 to 19 (MKTAIFTVVLALAVFAVLS). Positions 20–50 (FGWEANEKALSEEFTELIHEKEAASETEARE) are excised as a propeptide. Intrachain disulfides connect Cys51-Cys65, Cys58-Cys70, and Cys64-Cys81.

Belongs to the neurotoxin 10 (Hwtx-1) family. 13 (Hntx-13) subfamily. As to expression, expressed by the venom gland.

It is found in the secreted. Ion channel inhibitor. This Cyriopagopus hainanus (Chinese bird spider) protein is U7-theraphotoxin-Hhn1h.